Reading from the N-terminus, the 603-residue chain is Isovalerate--CoA ligase AAE2 (603 aa).

It belongs to the ATP-dependent AMP-binding enzyme family. Expressed at low levels in leaves, flowers and developing seeds.

It carries out the reaction 3-methylbutanoate + ATP + CoA = 3-methylbutanoyl-CoA + AMP + diphosphate. The catalysed reaction is hexanoate + ATP + CoA = hexanoyl-CoA + AMP + diphosphate. The enzyme catalyses butanoate + ATP + CoA = butanoyl-CoA + AMP + diphosphate. It catalyses the reaction pentanoate + ATP + CoA = pentanoyl-CoA + AMP + diphosphate. It carries out the reaction 3-methylpentanoate + ATP + CoA = 3-methylpentanoyl-CoA + AMP + diphosphate. The catalysed reaction is 4-methylpentanoate + ATP + CoA = 4-methylpentanoyl-CoA + AMP + diphosphate. Its function is as follows. Catalyzes the ligation of CoA on isovalerate to produce 3-methylbutanoyl-CoA. Can also use butanoate, pentanoate, hexanoate, 3-methylpentanoate and 4-methylpentanoate as substrates with a lower efficiency. The chain is Isovalerate--CoA ligase AAE2 from Arabidopsis thaliana (Mouse-ear cress).